The primary structure comprises 165 residues: Lipoprotein signal peptidase (165 aa).

The next 3 helical transmembrane spans lie at 12-32 (WLWV…LILQ), 70-90 (WFFA…MYRS), and 102-122 (ALII…GFVV). Catalysis depends on residues D123 and D141. The chain crosses the membrane as a helical span at residues 137–157 (FNLADSAICIGAALIVLEGFL).

This sequence belongs to the peptidase A8 family.

The protein localises to the cell inner membrane. It carries out the reaction Release of signal peptides from bacterial membrane prolipoproteins. Hydrolyzes -Xaa-Yaa-Zaa-|-(S,diacylglyceryl)Cys-, in which Xaa is hydrophobic (preferably Leu), and Yaa (Ala or Ser) and Zaa (Gly or Ala) have small, neutral side chains.. It participates in protein modification; lipoprotein biosynthesis (signal peptide cleavage). Its function is as follows. This protein specifically catalyzes the removal of signal peptides from prolipoproteins. The protein is Lipoprotein signal peptidase of Klebsiella aerogenes (strain ATCC 13048 / DSM 30053 / CCUG 1429 / JCM 1235 / KCTC 2190 / NBRC 13534 / NCIMB 10102 / NCTC 10006 / CDC 819-56) (Enterobacter aerogenes).